Here is a 453-residue protein sequence, read N- to C-terminus: MVASSFAVLRASRLCQWGWKSWTQLSGPPPLSTGGRTTFARTNATLSLEPGSRSCWDEPLSITVRGLAPEQPVTLRAALRDEKGALFRAHARYRADAGGELDLARAPALGGSFTGLEPMGLIWAMEPERPLWRLVKRDVQKPYVVELEVLDGHEPDGGQRLAQAVHERHFMAPGVRRVPVRDGRVRATLFLPPEPGPFPEIIDLFGVGGGLLEYRASLLAGKGFAVMALAYYNYDDLPKTMETMRIEYFEEAVNYLRGHPEVKGPGIGLLGISKGGELGLAMASFLKGITAAVVINGSVAAVGNTVCYKDETIPPVSLLRDKVKMTKDGLLDVVEALQSPLVDKKSFIPVERSDTTFLFLVGQDDHNWKSEFYAREASKRLQAHGKEKPQIICYPEAGHYIEPPYFPLCSAGMHLLVGANITFGGEPKPHSVAQLDAWQQLQTFFHKQLSGKS.

The N-terminal 42 residues, 1-42, are a transit peptide targeting the mitochondrion; sequence MVASSFAVLRASRLCQWGWKSWTQLSGPPPLSTGGRTTFART. An N6-acetyllysine modification is found at lysine 83. Catalysis depends on charge relay system residues serine 273, aspartate 365, and histidine 399. The residue at position 447 (lysine 447) is an N6-succinyllysine.

This sequence belongs to the C/M/P thioester hydrolase family. In terms of assembly, monomer. In terms of processing, the N-terminus is blocked. As to expression, constitutively expressed in heart and brown fat. Strongly induced in liver, and weakly in kidney, in peroxisome proliferator treated rat.

It localises to the mitochondrion matrix. It carries out the reaction hexadecanoyl-CoA + H2O = hexadecanoate + CoA + H(+). The enzyme catalyses tetradecanoyl-CoA + H2O = tetradecanoate + CoA + H(+). It catalyses the reaction octadecanoyl-CoA + H2O = octadecanoate + CoA + H(+). The catalysed reaction is eicosanoyl-CoA + H2O = eicosanoate + CoA + H(+). It carries out the reaction decanoyl-CoA + H2O = decanoate + CoA + H(+). The enzyme catalyses dodecanoyl-CoA + H2O = dodecanoate + CoA + H(+). It catalyses the reaction (9Z)-octadecenoyl-CoA + H2O = (9Z)-octadecenoate + CoA + H(+). The catalysed reaction is (9Z)-hexadecenoyl-CoA + H2O = (9Z)-hexadecenoate + CoA + H(+). It carries out the reaction (9E)-octadecenoyl-CoA + H2O = (9E)-octadecenoate + CoA + H(+). The enzyme catalyses (9Z,12Z)-octadecadienoyl-CoA + H2O = (9Z,12Z)-octadecadienoate + CoA + H(+). Its pathway is lipid metabolism; fatty acid metabolism. In terms of biological role, catalyzes the hydrolysis of acyl-CoAs into free fatty acids and coenzyme A (CoASH), regulating their respective intracellular levels. Displays higher activity toward long chain acyl CoAs (C14-C20). The enzyme is involved in enhancing the hepatic fatty acid oxidation in mitochondria. This chain is Acyl-coenzyme A thioesterase 2, mitochondrial (Acot2), found in Rattus norvegicus (Rat).